The sequence spans 393 residues: Cysteine desulfurase (393 aa).

Pyridoxal 5'-phosphate contacts are provided by residues 76 to 77 (GT), Asn-155, Gln-183, and 203 to 205 (SAH). At Lys-206 the chain carries N6-(pyridoxal phosphate)lysine. Thr-241 contacts pyridoxal 5'-phosphate. The active-site Cysteine persulfide intermediate is the Cys-328. Cys-328 serves as a coordination point for [2Fe-2S] cluster.

This sequence belongs to the class-V pyridoxal-phosphate-dependent aminotransferase family. NifS/IscS subfamily. As to quaternary structure, homodimer. Pyridoxal 5'-phosphate is required as a cofactor.

The catalysed reaction is (sulfur carrier)-H + L-cysteine = (sulfur carrier)-SH + L-alanine. Functionally, catalyzes the removal of elemental sulfur atoms from cysteine to produce alanine. Seems to participate in the biosynthesis of the nitrogenase metalloclusters by providing the inorganic sulfur required for the Fe-S core formation. This is Cysteine desulfurase from Bradyrhizobium diazoefficiens (strain JCM 10833 / BCRC 13528 / IAM 13628 / NBRC 14792 / USDA 110).